The sequence spans 90 residues: Probable Fe(2+)-trafficking protein (90 aa).

This sequence belongs to the Fe(2+)-trafficking protein family.

In terms of biological role, could be a mediator in iron transactions between iron acquisition and iron-requiring processes, such as synthesis and/or repair of Fe-S clusters in biosynthetic enzymes. In Haemophilus influenzae (strain 86-028NP), this protein is Probable Fe(2+)-trafficking protein.